Consider the following 259-residue polypeptide: Putative aldolase class 2 protein PA3430 (259 aa).

H113, H115, and H176 together coordinate Zn(2+).

Belongs to the aldolase class II family. Zn(2+) is required as a cofactor.

This is Putative aldolase class 2 protein PA3430 from Pseudomonas aeruginosa (strain ATCC 15692 / DSM 22644 / CIP 104116 / JCM 14847 / LMG 12228 / 1C / PRS 101 / PAO1).